The following is a 197-amino-acid chain: Ribonuclease HII (197 aa).

An RNase H type-2 domain is found at 11-197 (GRIAGVDEVG…FGPVKRVLGL (187 aa)). The a divalent metal cation site is built by aspartate 17, glutamate 18, and aspartate 109.

It belongs to the RNase HII family. Mn(2+) is required as a cofactor. Mg(2+) serves as cofactor.

The protein localises to the cytoplasm. The catalysed reaction is Endonucleolytic cleavage to 5'-phosphomonoester.. In terms of biological role, endonuclease that specifically degrades the RNA of RNA-DNA hybrids. This Edwardsiella ictaluri (strain 93-146) protein is Ribonuclease HII.